Consider the following 103-residue polypeptide: Protein S100-A16 (103 aa).

One can recognise an EF-hand 1; degenerate domain in the interval 12-47; that stretch reads VVVLVENFYKYVSKHSLVKNKISKSSFRKMLQKELN. Residues 54–89 form the EF-hand 2 domain; it reads GNRKAADKLIQNLDANHDGRISFDEYWTLIGGITSP. 5 residues coordinate Ca(2+): Asp-67, Asn-69, Asp-71, Arg-73, and Glu-78.

The protein belongs to the S-100 family. In terms of assembly, homodimer. Interacts with TP53.

Its subcellular location is the nucleus. It is found in the nucleolus. The protein localises to the cytoplasm. In terms of biological role, calcium-binding protein. Binds one calcium ion per monomer. Can promote differentiation of adipocytes (in vitro). Overexpression in preadipocytes increases their proliferation, enhances adipogenesis and reduces insulin-stimulated glucose uptake. The sequence is that of Protein S100-A16 (S100A16) from Bos taurus (Bovine).